Reading from the N-terminus, the 307-residue chain is Ribosomal RNA small subunit methyltransferase H (307 aa).

S-adenosyl-L-methionine-binding positions include 34–36 (GGH), Asp53, Leu88, Asp102, and Gln109.

This sequence belongs to the methyltransferase superfamily. RsmH family.

It localises to the cytoplasm. It catalyses the reaction cytidine(1402) in 16S rRNA + S-adenosyl-L-methionine = N(4)-methylcytidine(1402) in 16S rRNA + S-adenosyl-L-homocysteine + H(+). Functionally, specifically methylates the N4 position of cytidine in position 1402 (C1402) of 16S rRNA. This Sulfurimonas denitrificans (strain ATCC 33889 / DSM 1251) (Thiomicrospira denitrificans (strain ATCC 33889 / DSM 1251)) protein is Ribosomal RNA small subunit methyltransferase H.